A 595-amino-acid chain; its full sequence is Arginine--tRNA ligase (595 aa).

Residues 132–142 (ANPTGPLHVGH) carry the 'HIGH' region motif.

The protein belongs to the class-I aminoacyl-tRNA synthetase family. Monomer.

Its subcellular location is the cytoplasm. It carries out the reaction tRNA(Arg) + L-arginine + ATP = L-arginyl-tRNA(Arg) + AMP + diphosphate. The chain is Arginine--tRNA ligase from Cupriavidus necator (strain ATCC 17699 / DSM 428 / KCTC 22496 / NCIMB 10442 / H16 / Stanier 337) (Ralstonia eutropha).